A 321-amino-acid polypeptide reads, in one-letter code: Probable arabinan endo-1,5-alpha-L-arabinosidase A (321 aa).

An N-terminal signal peptide occupies residues 1 to 19; the sequence is MHPSTFVTTIACLAGLAHG. Aspartate 34 serves as the catalytic Proton acceptor. Catalysis depends on glutamate 200, which acts as the Proton donor.

It belongs to the glycosyl hydrolase 43 family.

It localises to the secreted. The catalysed reaction is Endohydrolysis of (1-&gt;5)-alpha-arabinofuranosidic linkages in (1-&gt;5)-arabinans.. It functions in the pathway glycan metabolism; L-arabinan degradation. Its function is as follows. Endo-1,5-alpha-L-arabinanase involved in degradation of pectin. Its preferred substrate is linear 1,5-alpha-L-arabinan. The polypeptide is Probable arabinan endo-1,5-alpha-L-arabinosidase A (abnA) (Aspergillus clavatus (strain ATCC 1007 / CBS 513.65 / DSM 816 / NCTC 3887 / NRRL 1 / QM 1276 / 107)).